The sequence spans 287 residues: Acetyl-coenzyme A carboxylase carboxyl transferase subunit beta (287 aa).

The 255-residue stretch at 33–287 (LFSKCPGCKH…TLLAFHGGQA (255 aa)) folds into the CoA carboxyltransferase N-terminal domain. Residues cysteine 37, cysteine 40, cysteine 55, and cysteine 58 each coordinate Zn(2+). The segment at 37–58 (CPGCKHTIYQKDLGNDSVCPNC) adopts a C4-type zinc-finger fold.

It belongs to the AccD/PCCB family. As to quaternary structure, acetyl-CoA carboxylase is a heterohexamer composed of biotin carboxyl carrier protein (AccB), biotin carboxylase (AccC) and two subunits each of ACCase subunit alpha (AccA) and ACCase subunit beta (AccD). It depends on Zn(2+) as a cofactor.

The protein resides in the cytoplasm. It carries out the reaction N(6)-carboxybiotinyl-L-lysyl-[protein] + acetyl-CoA = N(6)-biotinyl-L-lysyl-[protein] + malonyl-CoA. It participates in lipid metabolism; malonyl-CoA biosynthesis; malonyl-CoA from acetyl-CoA: step 1/1. Component of the acetyl coenzyme A carboxylase (ACC) complex. Biotin carboxylase (BC) catalyzes the carboxylation of biotin on its carrier protein (BCCP) and then the CO(2) group is transferred by the transcarboxylase to acetyl-CoA to form malonyl-CoA. The sequence is that of Acetyl-coenzyme A carboxylase carboxyl transferase subunit beta from Streptococcus sanguinis (strain SK36).